The sequence spans 204 residues: CASP-like protein 2U1 (204 aa).

Residues 1–36 are Cytoplasmic-facing; that stretch reads MGVLGGDAHVPIGSQVSPGSVVVTNNESFGHRKLLK. The helical transmembrane segment at 37–57 threads the bilayer; the sequence is GVDFLVRIKAFAFCLAVIVLL. Residues 58 to 84 lie on the Extracellular side of the membrane; that stretch reads KNNVQTTVIAPGIVLQAKYNNTKAPVS. Asn-77 is a glycosylation site (N-linked (GlcNAc...) asparagine). A helical transmembrane segment spans residues 85–105; the sequence is LLVLASICCGYAFLQAVVSLL. The Cytoplasmic portion of the chain corresponds to 106 to 117; that stretch reads SFIRDKRVLNNT. The helical transmembrane segment at 118 to 138 threads the bilayer; sequence VLAWLTFLLDQVLTYLLLGSA. Topologically, residues 139 to 170 are extracellular; it reads AATAEAAYIAKRGEDKVQWKAVCGPFKRFCDH. The helical transmembrane segment at 171 to 191 threads the bilayer; that stretch reads FAATVFLSFIAVIAFAVSAAI. Over 192–204 the chain is Cytoplasmic; that stretch reads SAYYLFRRSKGFK.

It belongs to the Casparian strip membrane proteins (CASP) family. Homodimer and heterodimers.

The protein localises to the cell membrane. This Selaginella moellendorffii (Spikemoss) protein is CASP-like protein 2U1.